The chain runs to 79 residues: Sulfur carrier protein TusA (79 aa).

The active-site Cysteine persulfide intermediate is the cysteine 17.

It belongs to the sulfur carrier protein TusA family.

It localises to the cytoplasm. Its function is as follows. Sulfur carrier protein which probably makes part of a sulfur-relay system. The protein is Sulfur carrier protein TusA of Haemophilus influenzae (strain 86-028NP).